Here is a 96-residue protein sequence, read N- to C-terminus: ATP-dependent Clp protease adapter protein ClpS (96 aa).

It belongs to the ClpS family. Binds to the N-terminal domain of the chaperone ClpA.

In terms of biological role, involved in the modulation of the specificity of the ClpAP-mediated ATP-dependent protein degradation. The protein is ATP-dependent Clp protease adapter protein ClpS of Campylobacter jejuni subsp. doylei (strain ATCC BAA-1458 / RM4099 / 269.97).